A 550-amino-acid polypeptide reads, in one-letter code: CTP synthase (550 aa).

The segment at 1 to 270 is amidoligase domain; that stretch reads MTKFVFVTGG…DRLICEELRL (270 aa). A CTP-binding site is contributed by serine 13. Residue serine 13 participates in UTP binding. Residues 14 to 19 and aspartate 71 each bind ATP; that span reads SLGKGI. Mg(2+) is bound by residues aspartate 71 and glutamate 144. CTP-binding positions include 151–153, 191–196, and lysine 227; these read DIE and KTKPTQ. Residues 191 to 196 and lysine 227 each bind UTP; that span reads KTKPTQ. A Glutamine amidotransferase type-1 domain is found at 295–547; that stretch reads TIGMVGKYVD…VEAALASQQR (253 aa). Glycine 356 provides a ligand contact to L-glutamine. Cysteine 383 functions as the Nucleophile; for glutamine hydrolysis in the catalytic mechanism. L-glutamine-binding positions include 384–387, glutamate 407, and arginine 473; that span reads LGMQ. Residues histidine 520 and glutamate 522 contribute to the active site.

The protein belongs to the CTP synthase family. Homotetramer.

The catalysed reaction is UTP + L-glutamine + ATP + H2O = CTP + L-glutamate + ADP + phosphate + 2 H(+). The enzyme catalyses L-glutamine + H2O = L-glutamate + NH4(+). It catalyses the reaction UTP + NH4(+) + ATP = CTP + ADP + phosphate + 2 H(+). The protein operates within pyrimidine metabolism; CTP biosynthesis via de novo pathway; CTP from UDP: step 2/2. With respect to regulation, allosterically activated by GTP, when glutamine is the substrate; GTP has no effect on the reaction when ammonia is the substrate. The allosteric effector GTP functions by stabilizing the protein conformation that binds the tetrahedral intermediate(s) formed during glutamine hydrolysis. Inhibited by the product CTP, via allosteric rather than competitive inhibition. Its function is as follows. Catalyzes the ATP-dependent amination of UTP to CTP with either L-glutamine or ammonia as the source of nitrogen. Regulates intracellular CTP levels through interactions with the four ribonucleotide triphosphates. The protein is CTP synthase of Cupriavidus necator (strain ATCC 17699 / DSM 428 / KCTC 22496 / NCIMB 10442 / H16 / Stanier 337) (Ralstonia eutropha).